The primary structure comprises 379 residues: NAD-dependent protein deacetylase sirtuin-2 (379 aa).

Basic and acidic residues predominate over residues 1–10 (MSEEVSKRVE). The tract at residues 1–32 (MSEEVSKRVEEEADTPGLEGQSDDSSDEGDAS) is disordered. Over residues 21–32 (QSDDSSDEGDAS) the composition is skewed to acidic residues. The 281-residue stretch at 55 to 335 (KVLDELTLDS…MTLAELLGWK (281 aa)) folds into the Deacetylase sirtuin-type domain. NAD(+) is bound by residues 83 to 87 (AGIST), 93 to 95 (DFR), and 165 to 168 (QNID). Residue histidine 185 is the Proton acceptor of the active site. Residues cysteine 193, cysteine 198, cysteine 219, and cysteine 222 each coordinate Zn(2+). NAD(+)-binding positions include 260-261 (TS), 284-286 (NME), and cysteine 321. A compositionally biased stretch (basic and acidic residues) spans 349–361 (IDSKDAKKTDKEA). Residues 349 to 379 (IDSKDAKKTDKEASQSSKSAVAEAEKTDKTE) are disordered.

The protein belongs to the sirtuin family. Class I subfamily. Zn(2+) is required as a cofactor.

The protein localises to the cytoplasm. The protein resides in the nucleus. The catalysed reaction is N(6)-acetyl-L-lysyl-[protein] + NAD(+) + H2O = 2''-O-acetyl-ADP-D-ribose + nicotinamide + L-lysyl-[protein]. It carries out the reaction N(6)-tetradecanoyl-L-lysyl-[protein] + NAD(+) + H2O = 2''-O-tetradecanoyl-ADP-D-ribose + nicotinamide + L-lysyl-[protein]. It catalyses the reaction N(6)-hexadecanoyl-L-lysyl-[protein] + NAD(+) + H2O = 2''-O-hexadecanoyl-ADP-D-ribose + nicotinamide + L-lysyl-[protein]. In terms of biological role, NAD-dependent protein deacetylase, which deacetylates internal lysines on histone and alpha-tubulin as well as many other proteins such as key transcription factors. Participates in the modulation of multiple and diverse biological processes such as cell cycle control, genomic integrity, microtubule dynamics, cell differentiation, metabolic networks, and autophagy. Plays a major role in the control of cell cycle progression and genomic stability. Deacetylates histone H4 at 'Lys-16' (H4K16ac) at the VEGFA promoter. Thereby contributes to regulate expression of vegfa, a key regulator of angiogenesis. In addition to protein deacetylase activity, also has activity toward long-chain fatty acyl groups and mediates protein-lysine demyristoylation and depalmitoylation of target proteins. This Danio rerio (Zebrafish) protein is NAD-dependent protein deacetylase sirtuin-2 (sirt2).